A 63-amino-acid chain; its full sequence is MEVKVFDNDVEKALKILKNKLSKSGLFKELKVRRAYEKPSVKRKRKAIEARRRFAKVQRRRSS.

Belongs to the bacterial ribosomal protein bS21 family.

The chain is Small ribosomal subunit protein bS21 from Syntrophus aciditrophicus (strain SB).